A 173-amino-acid chain; its full sequence is Enhancer of split mdelta protein (173 aa).

In terms of domain architecture, bHLH spans 15–72; it reads YRKVTKPLLERKRRARMNLYLDELKDLIVDTMDAQGEQVSKLEKADILELTVNYLKAQ. Positions 93-126 constitute an Orange domain; it reads FRAGYTQAAYEVSHIFSTVPGLDLKFGTHLMKQL. The tract at residues 147 to 173 is disordered; it reads VNLADQKRSKSPREEDIHHGEEVWRPW. A compositionally biased stretch (basic and acidic residues) spans 151–173; sequence DQKRSKSPREEDIHHGEEVWRPW. Residues 170 to 173 carry the WRPW motif motif; the sequence is WRPW.

As to quaternary structure, transcription repression requires formation of a complex with a corepressor protein (Groucho).

The protein resides in the nucleus. Its function is as follows. Transcriptional repressor of genes that require a bHLH protein for their transcription. May serve as a transcriptional regulator of the Achaete-scute complex (AS-C) genes. Contributes to the neural-epidermal lineage decision during early neurogenesis. As part of the Notch signaling pathway, required to maintain the self-renewal and identity of type II neuroblasts by regulating the expression of the transcriptional repressor erm. The sequence is that of Enhancer of split mdelta protein from Drosophila melanogaster (Fruit fly).